We begin with the raw amino-acid sequence, 306 residues long: Acetyl-coenzyme A carboxylase carboxyl transferase subunit beta (306 aa).

Residues 25-294 (LWIKCPETGE…TVVGANDDKT (270 aa)) enclose the CoA carboxyltransferase N-terminal domain.

This sequence belongs to the AccD/PCCB family. As to quaternary structure, acetyl-CoA carboxylase is a heterohexamer composed of biotin carboxyl carrier protein (AccB), biotin carboxylase (AccC) and two subunits each of ACCase subunit alpha (AccA) and ACCase subunit beta (AccD).

Its subcellular location is the cytoplasm. It catalyses the reaction N(6)-carboxybiotinyl-L-lysyl-[protein] + acetyl-CoA = N(6)-biotinyl-L-lysyl-[protein] + malonyl-CoA. The protein operates within lipid metabolism; malonyl-CoA biosynthesis; malonyl-CoA from acetyl-CoA: step 1/1. In terms of biological role, component of the acetyl coenzyme A carboxylase (ACC) complex. Biotin carboxylase (BC) catalyzes the carboxylation of biotin on its carrier protein (BCCP) and then the CO(2) group is transferred by the transcarboxylase to acetyl-CoA to form malonyl-CoA. This Allorhizobium ampelinum (strain ATCC BAA-846 / DSM 112012 / S4) (Agrobacterium vitis (strain S4)) protein is Acetyl-coenzyme A carboxylase carboxyl transferase subunit beta.